Consider the following 238-residue polypeptide: tRNA (guanine-N(7)-)-methyltransferase (238 aa).

The S-adenosyl-L-methionine site is built by E68, E93, D120, and D143. The active site involves D143. Substrate-binding positions include K147, D179, and 216–219 (TKFE).

It belongs to the class I-like SAM-binding methyltransferase superfamily. TrmB family. As to quaternary structure, monomer.

The enzyme catalyses guanosine(46) in tRNA + S-adenosyl-L-methionine = N(7)-methylguanosine(46) in tRNA + S-adenosyl-L-homocysteine. Its pathway is tRNA modification; N(7)-methylguanine-tRNA biosynthesis. Catalyzes the formation of N(7)-methylguanine at position 46 (m7G46) in tRNA. In Edwardsiella ictaluri (strain 93-146), this protein is tRNA (guanine-N(7)-)-methyltransferase.